We begin with the raw amino-acid sequence, 2258 residues long: Probable serine/threonine-protein kinase ifkA (2258 aa).

Disordered stretches follow at residues 43 to 108 and 189 to 308; these read RVNS…HQMG and EMNN…KEND. The segment covering 45–57 has biased composition (low complexity); sequence NSSDDINNNNNNN. A compositionally biased stretch (acidic residues) spans 58–100; the sequence is NDDDDDNDDYDDSDDENSDSDYDDYDDSDDENSDDEFYSDDED. Over residues 191-301 the composition is skewed to low complexity; it reads NNLTNSNNSN…NKELIDNNNN (111 aa). Residues 273 to 309 are a coiled coil; that stretch reads NNNNNISNNKINKINNNNNNKELIDNNNNNKDKENDL. The Protein kinase 1 domain occupies 319–691; the sequence is WKKGSCIERK…AGILLKHPFL (373 aa). ATP is bound by residues 325–333 and K348; that span reads IERKSNYSV. Positions 358–398 are disordered; sequence SSSSLTSLSNSNNNNSNNNNNNNNNNNNNNNNNNNNNNNNN. The segment covering 359-398 has biased composition (low complexity); sequence SSSLTSLSNSNNNNSNNNNNNNNNNNNNNNNNNNNNNNNN. D498 (proton acceptor) is an active-site residue. 2 disordered regions span residues 741-768 and 782-870; these read KSQTPNNNNDNNNLASSNELLSSSNGSN and PLAT…MTPL. Low complexity predominate over residues 746 to 768; the sequence is NNNNDNNNLASSNELLSSSNGSN. The span at 782–791 shows a compositional bias: polar residues; the sequence is PLATSSSLDN. Pro residues predominate over residues 793-805; sequence TPPPSRPISPKPS. The segment covering 841 to 870 has biased composition (low complexity); sequence PQQNFNTPPTTTTTTTTPTATPTTPTMTPL. Positions 894–1482 constitute a Protein kinase 2 domain; that stretch reads FEEIEMIGKG…TKQLLESGLL (589 aa). ATP-binding positions include 900-908 and K923; that span reads IGKGGFGVV. The segment covering 1053–1094 has biased composition (low complexity); it reads TLSSSNTSSSSSLLSNNKSKILNTSKSTSTNTSTSTSTSNTN. The segment at 1053 to 1259 is disordered; sequence TLSSSNTSSS…SSSRKKPPKE (207 aa). The span at 1095–1106 shows a compositional bias: basic residues; that stretch reads KNKKISKKKKSK. Low complexity predominate over residues 1156–1185; it reads NNNNNNDNNNNYHSDNESDSFSGSISMSDG. Residues 1206–1233 show a composition bias toward acidic residues; that stretch reads DENENDDDDEEDDDDEYDEEDDDYETFD. Low complexity predominate over residues 1242–1251; the sequence is SNNSKLSTSS. The active-site Proton acceptor is D1313. Disordered regions lie at residues 1343–1370 and 2048–2104; these read KSDDLNSSTSNTANNINLSSSTNSTAQQ and GSGG…QQTS. Residues 1347–1368 show a composition bias toward low complexity; that stretch reads LNSSTSNTANNINLSSSTNSTA. Positions 2048–2072 are enriched in gly residues; that stretch reads GSGGSGGSGGGSSMSSGGGGGGNSN. Residues 2085–2099 are compositionally biased toward low complexity; the sequence is SNQSTSSSGNSNNSN.

The protein belongs to the protein kinase superfamily. Ser/Thr protein kinase family.

The catalysed reaction is L-seryl-[protein] + ATP = O-phospho-L-seryl-[protein] + ADP + H(+). It catalyses the reaction L-threonyl-[protein] + ATP = O-phospho-L-threonyl-[protein] + ADP + H(+). Phosphorylates eIF2-alpha, from 1 to 7 hours after the onset of development or during the preaggregation state, resulting in a shift from polysomes to free ribosomes for bulk mRNA. In Dictyostelium discoideum (Social amoeba), this protein is Probable serine/threonine-protein kinase ifkA (ifkA).